Consider the following 65-residue polypeptide: Large ribosomal subunit protein bL35 (65 aa).

2 stretches are compositionally biased toward basic residues: residues 1–11 and 21–43; these read MPKIKTRRSAA and KFKRRRQNLRHILTKKAASRKMR. Positions 1-65 are disordered; that stretch reads MPKIKTRRSA…KAVRRMLPNG (65 aa).

It belongs to the bacterial ribosomal protein bL35 family.

The polypeptide is Large ribosomal subunit protein bL35 (Desulfovibrio desulfuricans (strain ATCC 27774 / DSM 6949 / MB)).